The chain runs to 351 residues: Transmembrane protein 115 (351 aa).

Over 1–19 (MQRALPGARQHLGAILASA) the chain is Cytoplasmic. Positions 1–205 (MQRALPGARQ…FGLLSSWVYL (205 aa)) are mediates homooligomerization. The chain crosses the membrane as a helical span at residues 20–40 (SVVVKALCAAVLFLYLLSFAV). Topologically, residues 41 to 97 (DTGCLAVTPGYLFPPNFWIWTLATHGLMEQHVWDVAISLTTVVVAGRLLEPLWGALE) are lumenal. A helical membrane pass occupies residues 98 to 118 (LLIFFSVVNVSVGLLGAFAYL). The Cytoplasmic portion of the chain corresponds to 119-126 (LTYMASFN). A helical transmembrane segment spans residues 127–147 (LVYLFTVRIHGALGFLGGVLV). The Lumenal segment spans residues 148–165 (ALKQTMGDCVVLRVPQVR). Residues 166–186 (VSVMPMLLLALLLLLRLATLL) form a helical membrane-spanning segment. Residues 187-351 (QSPALASYGF…ITFEAAPPTL (165 aa)) lie on the Cytoplasmic side of the membrane. The interval 206 to 229 (RFYQRHSRGRGDMADHFAFATFFP) is mediates localization to the Golgi. The segment at 301 to 351 (QSIWPSMDDDEEESGAKVDSPLPSDKAPTPPGKGAAPESSLITFEAAPPTL) is disordered. A Phosphothreonine modification is found at Thr329.

The protein belongs to the TMEM115 family. Homooligomer. Interacts with COPB1. May interact with LMAN1. Interacts with the COG complex; probably through COG3. As to expression, expressed strongly in kidney and skeletal muscle, followed by liver, placenta, pancreas, and lung, with low amounts in heart and only traces in brain. Widely expressed with ubiquitous expression in epithelial tissues (at protein level).

The protein resides in the golgi apparatus. The protein localises to the golgi stack membrane. May play a role in retrograde transport of proteins from the Golgi to the endoplasmic reticulum. May indirectly play a role in protein glycosylation in the Golgi. In Homo sapiens (Human), this protein is Transmembrane protein 115.